The following is a 131-amino-acid chain: Profilin (131 aa).

This sequence belongs to the profilin family. In terms of assembly, occurs in many kinds of cells as a complex with monomeric actin in a 1:1 ratio.

It localises to the cytoplasm. The protein localises to the cytoskeleton. Binds to actin and affects the structure of the cytoskeleton. At high concentrations, profilin prevents the polymerization of actin, whereas it enhances it at low concentrations. By binding to PIP2, it inhibits the formation of IP3 and DG. This Citrus sinensis (Sweet orange) protein is Profilin.